Here is a 259-residue protein sequence, read N- to C-terminus: Ribonuclease PH (259 aa).

Phosphate-binding positions include R88 and G126–R128.

This sequence belongs to the RNase PH family. Homohexameric ring arranged as a trimer of dimers.

It carries out the reaction tRNA(n+1) + phosphate = tRNA(n) + a ribonucleoside 5'-diphosphate. Functionally, phosphorolytic 3'-5' exoribonuclease that plays an important role in tRNA 3'-end maturation. Removes nucleotide residues following the 3'-CCA terminus of tRNAs; can also add nucleotides to the ends of RNA molecules by using nucleoside diphosphates as substrates, but this may not be physiologically important. Probably plays a role in initiation of 16S rRNA degradation (leading to ribosome degradation) during starvation. This chain is Ribonuclease PH, found in Mycobacterium bovis (strain BCG / Pasteur 1173P2).